The sequence spans 403 residues: Glucose/galactose-binding lipoprotein (403 aa).

The signal sequence occupies residues 1-25; the sequence is MKENSCTACSRRLALFVGAAVLVVG. C26 is lipidated: N-palmitoyl cysteine. C26 carries the S-diacylglycerol cysteine lipid modification.

Belongs to the bacterial solute-binding protein 2 family.

The protein resides in the cell membrane. May be involved in the transport of sugars. May have a role in chemotaxis. The chain is Glucose/galactose-binding lipoprotein (mglB) from Treponema pallidum (strain Nichols).